Here is a 610-residue protein sequence, read N- to C-terminus: ESX-5 secretion system protein EccA5 (610 aa).

ATP is bound at residue 357–364 (GPPGTGKT).

The protein belongs to the CbxX/CfxQ family. As to quaternary structure, part of the ESX-5 / type VII secretion system (T7SS), which is composed of cytosolic and membrane components.

The protein resides in the cytoplasm. Its function is as follows. Part of the ESX-5 specialized secretion system, which is responsible for the secretion of EsxN and a number of PE_PGRS and PPE proteins. EccA5 exhibits ATPase activity and may provide energy for the export of ESX-5 substrates. This is ESX-5 secretion system protein EccA5 from Mycobacterium marinum (strain ATCC BAA-535 / M).